The chain runs to 292 residues: MKQHFTCIGIVGRPRHDSALITHKTLYEWLIKNGYKVFIEHTVARELKLNNPNTATLIEIGEFCDLAVVIGGDGNLLCAARVLSFYNIKIIGINRGNLGFLADLNPDTGLKKLSEVLSGNYSLENRFLLDAQVCQKKIISRSSIAINEVVLHTKNLAHMIEFEVYIDNKFSFSQRADGLIVSTPTGSTGYSLSAGGPIIAASLDAIVLVPMFPHTLSARPLVIHSDSIICLKFSNIQTNLKISCDSQIILTIKKGECVFIRRSCYYLNLIHPKSYNYFKTLTSKLSWSKKFF.

Residue Asp73 is the Proton acceptor of the active site. NAD(+)-binding positions include 73–74, 147–148, His158, Arg175, Asp177, 188–193, and Gln247; these read DG, NE, and TGYSLS.

This sequence belongs to the NAD kinase family. A divalent metal cation serves as cofactor.

It is found in the cytoplasm. It carries out the reaction NAD(+) + ATP = ADP + NADP(+) + H(+). Involved in the regulation of the intracellular balance of NAD and NADP, and is a key enzyme in the biosynthesis of NADP. Catalyzes specifically the phosphorylation on 2'-hydroxyl of the adenosine moiety of NAD to yield NADP. The polypeptide is NAD kinase (Buchnera aphidicola subsp. Acyrthosiphon pisum (strain 5A)).